A 342-amino-acid chain; its full sequence is Uroporphyrinogen decarboxylase (342 aa).

Substrate-binding positions include Arg-22–Arg-26, Phe-42, Asp-72, Tyr-146, Ser-201, and His-317.

Belongs to the uroporphyrinogen decarboxylase family. Homodimer.

Its subcellular location is the cytoplasm. The catalysed reaction is uroporphyrinogen III + 4 H(+) = coproporphyrinogen III + 4 CO2. Its pathway is porphyrin-containing compound metabolism; protoporphyrin-IX biosynthesis; coproporphyrinogen-III from 5-aminolevulinate: step 4/4. Catalyzes the decarboxylation of four acetate groups of uroporphyrinogen-III to yield coproporphyrinogen-III. The protein is Uroporphyrinogen decarboxylase of Orientia tsutsugamushi (strain Ikeda) (Rickettsia tsutsugamushi).